The primary structure comprises 881 residues: Valine--tRNA ligase (881 aa).

Residues 49-59 carry the 'HIGH' region motif; that stretch reads PNVTGKLHLGH. The 'KMSKS' region signature appears at 526–530; the sequence is KMSKS. An ATP-binding site is contributed by lysine 529. A coiled-coil region spans residues 810–881; the sequence is LADLINLDEE…VRQRLADLEK (72 aa).

Belongs to the class-I aminoacyl-tRNA synthetase family. ValS type 1 subfamily. In terms of assembly, monomer.

It localises to the cytoplasm. It carries out the reaction tRNA(Val) + L-valine + ATP = L-valyl-tRNA(Val) + AMP + diphosphate. Its function is as follows. Catalyzes the attachment of valine to tRNA(Val). As ValRS can inadvertently accommodate and process structurally similar amino acids such as threonine, to avoid such errors, it has a 'posttransfer' editing activity that hydrolyzes mischarged Thr-tRNA(Val) in a tRNA-dependent manner. The polypeptide is Valine--tRNA ligase (Bacillus cereus (strain ATCC 10987 / NRS 248)).